A 102-amino-acid polypeptide reads, in one-letter code: Small ribosomal subunit protein uS10 (102 aa).

It belongs to the universal ribosomal protein uS10 family. In terms of assembly, part of the 30S ribosomal subunit.

In terms of biological role, involved in the binding of tRNA to the ribosomes. The polypeptide is Small ribosomal subunit protein uS10 (Treponema pallidum (strain Nichols)).